A 210-amino-acid polypeptide reads, in one-letter code: Putative fructokinase-8 (210 aa).

It belongs to the carbohydrate kinase PfkB family.

The enzyme catalyses D-fructose + ATP = D-fructose 6-phosphate + ADP + H(+). Its pathway is glycan biosynthesis; starch biosynthesis. Its function is as follows. May play an important role in maintaining the flux of carbon towards starch formation. The sequence is that of Putative fructokinase-8 from Arabidopsis thaliana (Mouse-ear cress).